Reading from the N-terminus, the 609-residue chain is MCGIVAAVTQRNIANFLIDGIKKLEYRGYDSSGLAVIDNKNNIVRIRCVGKVNELIKKTNKKKILGSIGVAHTRWATHGKVSKENTHPHISSNIIVVHNGIIENNSTLRGFLKKQGYIFSSDTDTEVIAHLLHWEQNKKKDSLIKVIQNSIKKLDGNYSMVVIDQNNPSKLIAARSGSPLIIGLGTEENFIASDQIALLHVTKRFIYLEEGDIAIVARKEINIFNKNNSIIQREEVVSNIEYKSAKKGKYRYYMEKEIHEQPKSIRNTLKNRLTNSNKVHFSELGSKENNIFYNTEHIQIVACGTSYNAAMVSRYWFEELANIPCDVEIASEFSSRKLVVRKKSLLITLSQSGETADTLSALRYSKKLGYLGNLTICNMKSSSLVRESDFYILTKAGLEIGVASTKSFTTQLTVLLLLVAKIINSKKENNNTSKRIVQTLSILPVRIEEILKKKQLIQDMANTLANKKNMLFLGRGNQYPIAMEGALKLKEISYIHAEAYPSGELKHGPLALIDKNIPVIMIAPENSLLEKNKKNIKEICSRGGIVYVFSNQEFDYEENINTIKLPYVEELIAPIFYTIPLQLFAYYVALKKGRDIDQPRHLAKSVTVE.

The active-site Nucleophile; for GATase activity is the C2. Residues 2-219 enclose the Glutamine amidotransferase type-2 domain; sequence CGIVAAVTQR…EGDIAIVARK (218 aa). SIS domains are found at residues 288-428 and 460-599; these read ENNI…SKKE and MANT…IDQP. K604 acts as the For Fru-6P isomerization activity in catalysis.

In terms of assembly, homodimer.

The protein localises to the cytoplasm. It catalyses the reaction D-fructose 6-phosphate + L-glutamine = D-glucosamine 6-phosphate + L-glutamate. Catalyzes the first step in hexosamine metabolism, converting fructose-6P into glucosamine-6P using glutamine as a nitrogen source. The protein is Glutamine--fructose-6-phosphate aminotransferase [isomerizing] of Buchnera aphidicola subsp. Acyrthosiphon pisum (strain APS) (Acyrthosiphon pisum symbiotic bacterium).